The chain runs to 267 residues: Small ribosomal subunit protein uS2 (267 aa).

The disordered stretch occupies residues Met1–Glu72. The span at Asp10 to Glu72 shows a compositional bias: acidic residues.

Belongs to the universal ribosomal protein uS2 family. In terms of processing, the N-terminus is blocked.

This Haloarcula marismortui (strain ATCC 43049 / DSM 3752 / JCM 8966 / VKM B-1809) (Halobacterium marismortui) protein is Small ribosomal subunit protein uS2 (rps2).